A 460-amino-acid chain; its full sequence is Rab-3A-interacting protein (460 aa).

A phosphoserine mark is found at serine 147, serine 149, serine 247, serine 250, serine 272, and serine 280. The stretch at 149–244 forms a coiled coil; that stretch reads SVLEVREKGY…EVAALKTLVL (96 aa). Positions 246 to 280 are disordered; sequence SSPTSPTQEPLAAGKTPFKRGHTRNKSTSSAMSGS. The segment covering 271-280 has biased composition (polar residues); it reads KSTSSAMSGS.

The protein belongs to the SEC2 family. Homodimer. Interacts with the N-terminal region of SSX2. Interacts with the GDP-bound forms of RAB8A and RAB8B. The interaction with RAB8A is prevented by phosphorylation of RAB8A at 'Thr-72'. Interacts with the GDP-bound forms of RAB3A and RAB3D. Interacts with DCDC1. Interacts (via the N-terminal region) with TRAPPC14; this interaction mediates RAB3IP association with the TRAPP II complex. Forms a heterotetramer with RAB11A where RAB3IP homodimer binds two RAB11A subunits. Forms a complex with RAB11A and RAB11FIP3, probably a heterohexamer with two of each protein subunit, where Rabin8/RAB3IP and RAB11FIP3 simultaneously bind to RAB11A; the complex promotes preciliary trafficking. Forms a complex containing RAB11A, ASAP1, RAB3IP, RAP11FIP3 and ARF4; the complex promotes preciliary trafficking; the complex binds to RHO in photoreceptor cells and promotes RHO ciliary transport. In terms of tissue distribution, ubiquitously expressed. Expressed at highest level in testis.

The protein localises to the cytoplasm. Its subcellular location is the nucleus. It localises to the cytoskeleton. The protein resides in the cell projection. It is found in the lamellipodium. Guanine nucleotide exchange factor (GEF) which may activate RAB8A and RAB8B. Promotes the exchange of GDP to GTP, converting inactive GDP-bound Rab proteins into their active GTP-bound form. Mediates the release of GDP from RAB8A and RAB8B but not from RAB3A or RAB5. Modulates actin organization and promotes polarized transport of RAB8A-specific vesicles to the cell surface. Together with RAB11A, RAB8A, the exocyst complex, PARD3, PRKCI, ANXA2, CDC42 and DNMBP promotes transcytosis of PODXL to the apical membrane initiation sites (AMIS), apical surface formation and lumenogenesis. Together with RAB11A and FIP3/RAB11FIP3, parts of the ciliary targeting complex that promotes preciliary vesicle trafficking to mother centriole and ciliogenesis initiation. Part of the ciliary targeting complex containing Rab11, ASAP1, RAB3IP and RAB11FIP3 and ARF4 that promotes RAB3IP preciliary vesicle trafficking to mother centriole and ciliogenesis initiation. This Rattus norvegicus (Rat) protein is Rab-3A-interacting protein (Rab3ip).